Consider the following 236-residue polypeptide: Small ribosomal subunit protein uS3 (236 aa).

One can recognise a KH type-2 domain in the interval 39 to 107 (IREFLTEELK…DTSLNIVEVR (69 aa)). The segment at 214-236 (ASERRAVEGDNQGSSSNRRRENA) is disordered.

It belongs to the universal ribosomal protein uS3 family. As to quaternary structure, part of the 30S ribosomal subunit. Forms a tight complex with proteins S10 and S14.

Binds the lower part of the 30S subunit head. Binds mRNA in the 70S ribosome, positioning it for translation. The protein is Small ribosomal subunit protein uS3 of Brucella melitensis biotype 1 (strain ATCC 23456 / CCUG 17765 / NCTC 10094 / 16M).